The sequence spans 408 residues: Cytochrome bc1 complex Rieske iron-sulfur subunit (408 aa).

Transmembrane regions (helical) follow at residues 56-76, 98-118, and 166-186; these read VGIW…TYIF, MLGI…VLYV, and LLAG…GGMI. Positions 293 to 390 constitute a Rieske domain; the sequence is HGPRNAVMLI…ITVDEEGYLI (98 aa). Cysteine 333, histidine 335, cysteine 352, and histidine 355 together coordinate [2Fe-2S] cluster. A disulfide bridge links cysteine 338 with cysteine 354.

Belongs to the Rieske iron-sulfur protein family. The cytochrome bc1 complex is composed of a cytochrome b (QcrB), the Rieske iron-sulfur protein (QcrA) and a diheme cytochrome c (QcrC) subunit. The bc1 complex forms a supercomplex with cytochrome c oxidase (cytochrome aa3). The cofactor is [2Fe-2S] cluster.

The protein resides in the cell membrane. In terms of biological role, iron-sulfur subunit of the cytochrome bc1 complex, an essential component of the respiratory electron transport chain required for ATP synthesis. The bc1 complex catalyzes the oxidation of menaquinol and the reduction of cytochrome c in the respiratory chain. The bc1 complex operates through a Q-cycle mechanism that couples electron transfer to generation of the proton gradient that drives ATP synthesis. The chain is Cytochrome bc1 complex Rieske iron-sulfur subunit (qcrA) from Corynebacterium efficiens (strain DSM 44549 / YS-314 / AJ 12310 / JCM 11189 / NBRC 100395).